The chain runs to 144 residues: Large ribosomal subunit protein uL11 (144 aa).

It belongs to the universal ribosomal protein uL11 family. Part of the ribosomal stalk of the 50S ribosomal subunit. Interacts with L10 and the large rRNA to form the base of the stalk. L10 forms an elongated spine to which L12 dimers bind in a sequential fashion forming a multimeric L10(L12)X complex. Contacts the CTC protein (RL25). Post-translationally, one or more lysine residues are methylated.

Its function is as follows. Forms part of the ribosomal stalk which helps the ribosome interact with GTP-bound translation factors. This chain is Large ribosomal subunit protein uL11, found in Deinococcus radiodurans (strain ATCC 13939 / DSM 20539 / JCM 16871 / CCUG 27074 / LMG 4051 / NBRC 15346 / NCIMB 9279 / VKM B-1422 / R1).